We begin with the raw amino-acid sequence, 64 residues long: MPKMKTKSGAAKRFLKTASGYKHKHAFKSHILTKMSTKRKRQLRGSSLIGPSDVAKVERMLRVR.

The protein belongs to the bacterial ribosomal protein bL35 family.

The chain is Large ribosomal subunit protein bL35 from Ectopseudomonas mendocina (strain ymp) (Pseudomonas mendocina).